Here is a 377-residue protein sequence, read N- to C-terminus: Pseudouridylate synthase RPUSD4, mitochondrial (377 aa).

The transit peptide at 1–15 directs the protein to the mitochondrion; sequence MAAPRWSASGPWIRG. The stretch at 36-62 forms a coiled coil; the sequence is AASTAINAQRLAEKLRAQKREQDTKKE. The active site involves aspartate 153.

This sequence belongs to the pseudouridine synthase RluA family. In terms of assembly, interacts with 16S mt-rRNA, mt-tRNA(Phe) and mt-tRNA(Met). Forms a regulatory protein-RNA complex, consisting of RCC1L, NGRN, RPUSD3, RPUSD4, TRUB2, FASTKD2 and 16S mt-rRNA.

Its subcellular location is the mitochondrion matrix. The protein localises to the nucleus. It is found in the cytoplasm. It catalyses the reaction uridine in 5S rRNA = pseudouridine in 5S rRNA. It carries out the reaction a uridine in tRNA = a pseudouridine in tRNA. The enzyme catalyses a uridine in mRNA = a pseudouridine in mRNA. Its function is as follows. Catalyzes uridine to pseudouridine isomerization (pseudouridylation) of different mitochondrial RNA substrates. Acts on position 1397 in 16S mitochondrial ribosomal RNA (16S mt-rRNA). This modification is required for the assembly of 16S mt-rRNA into a functional mitochondrial ribosome. As a component of a functional protein-RNA module, consisting of RCC1L, NGRN, RPUSD3, RPUSD4, TRUB2, FASTKD2 and 16S mt-rRNA, controls 16S mt-rRNA abundance and is required for intra-mitochondrial translation. Acts on position 39 in mitochondrial tRNA(Phe). Also catalyzes pseudouridylation of mRNAs in nucleus: acts as a regulator of pre-mRNA splicing by mediating pseudouridylation of pre-mRNAs at locations associated with alternatively spliced regions. Pseudouridylation of pre-mRNAs near splice sites directly regulates mRNA splicing and mRNA 3'-end processing. The protein is Pseudouridylate synthase RPUSD4, mitochondrial of Homo sapiens (Human).